The chain runs to 638 residues: Phosphomethylpyrimidine synthase (638 aa).

Substrate is bound by residues Asn-243, Met-272, Tyr-301, His-337, 357-359 (SRG), 398-401 (DGLR), and Glu-437. His-441 serves as a coordination point for Zn(2+). Residue Tyr-464 participates in substrate binding. His-505 contacts Zn(2+). Residues Cys-585, Cys-588, and Cys-593 each coordinate [4Fe-4S] cluster.

The protein belongs to the ThiC family. In terms of assembly, homodimer. [4Fe-4S] cluster is required as a cofactor.

The catalysed reaction is 5-amino-1-(5-phospho-beta-D-ribosyl)imidazole + S-adenosyl-L-methionine = 4-amino-2-methyl-5-(phosphooxymethyl)pyrimidine + CO + 5'-deoxyadenosine + formate + L-methionine + 3 H(+). It functions in the pathway cofactor biosynthesis; thiamine diphosphate biosynthesis. Catalyzes the synthesis of the hydroxymethylpyrimidine phosphate (HMP-P) moiety of thiamine from aminoimidazole ribotide (AIR) in a radical S-adenosyl-L-methionine (SAM)-dependent reaction. In Dechloromonas aromatica (strain RCB), this protein is Phosphomethylpyrimidine synthase.